The sequence spans 424 residues: MSNANPFFSQSLAERDASVRGAILKELERQQSQVELIASENIVSRAVLDAQGSVLTNKYAEGYPGKRYYGGCEFADEVEALAIERVKRLFNAGHANVQPHSGAQANGAVMLALAKPGDTVLGMSLDAGGHLTHGAKPALSGKWFNALQYGVSRDTMLIDYDQVEALAQQHKPSLIIAGFSAYPRKLDFARFRAIADSVGAKLMVDMAHIAGVIAAGRHANPVEHAHVVTSTTHKTLRGPRGGFVLTNDEEIAKKINSAVFPGLQGGPLMHVIAGKAVAFGEALTDDFKTYIDRVLANAQALGDVLKAGGVDLVTGGTDNHLLLVDLRPKGLKGAQVEQALERAGITCNKNGIPFDPEKPTITSGIRLGTPAGTTRGFGAAEFREVGRLILEVFEALRTNPEGDHATEQRVRREIFALCERFPIY.

(6S)-5,6,7,8-tetrahydrofolate contacts are provided by residues Leu-125 and 129 to 131; that span reads GHL. Residue Lys-234 is modified to N6-(pyridoxal phosphate)lysine. A (6S)-5,6,7,8-tetrahydrofolate-binding site is contributed by Glu-250.

Belongs to the SHMT family. Homodimer. It depends on pyridoxal 5'-phosphate as a cofactor.

It localises to the cytoplasm. The enzyme catalyses (6R)-5,10-methylene-5,6,7,8-tetrahydrofolate + glycine + H2O = (6S)-5,6,7,8-tetrahydrofolate + L-serine. Its pathway is one-carbon metabolism; tetrahydrofolate interconversion. The protein operates within amino-acid biosynthesis; glycine biosynthesis; glycine from L-serine: step 1/1. Its function is as follows. Catalyzes the reversible interconversion of serine and glycine with tetrahydrofolate (THF) serving as the one-carbon carrier. This reaction serves as the major source of one-carbon groups required for the biosynthesis of purines, thymidylate, methionine, and other important biomolecules. Also exhibits THF-independent aldolase activity toward beta-hydroxyamino acids, producing glycine and aldehydes, via a retro-aldol mechanism. The sequence is that of Serine hydroxymethyltransferase 2 from Burkholderia pseudomallei (strain 1710b).